The primary structure comprises 353 residues: Ribosomal RNA small subunit methyltransferase H (353 aa).

S-adenosyl-L-methionine contacts are provided by residues 39–41 (AGH), Asp-58, Phe-90, Asp-108, and Gln-115. Residues 334–353 (SEDGVRGAHGHRRRTQARRG) form a disordered region. The span at 341–353 (AHGHRRRTQARRG) shows a compositional bias: basic residues.

The protein belongs to the methyltransferase superfamily. RsmH family.

Its subcellular location is the cytoplasm. It carries out the reaction cytidine(1402) in 16S rRNA + S-adenosyl-L-methionine = N(4)-methylcytidine(1402) in 16S rRNA + S-adenosyl-L-homocysteine + H(+). Specifically methylates the N4 position of cytidine in position 1402 (C1402) of 16S rRNA. The polypeptide is Ribosomal RNA small subunit methyltransferase H (Bifidobacterium animalis subsp. lactis (strain AD011)).